Consider the following 391-residue polypeptide: Chorismate synthase (391 aa).

R48 serves as a coordination point for NADP(+). Residues 126–128, G286, 301–305, and R328 contribute to the FMN site; these read RAS and KPTSS.

Belongs to the chorismate synthase family. FMNH2 serves as cofactor.

It catalyses the reaction 5-O-(1-carboxyvinyl)-3-phosphoshikimate = chorismate + phosphate. It participates in metabolic intermediate biosynthesis; chorismate biosynthesis; chorismate from D-erythrose 4-phosphate and phosphoenolpyruvate: step 7/7. In terms of biological role, catalyzes the anti-1,4-elimination of the C-3 phosphate and the C-6 proR hydrogen from 5-enolpyruvylshikimate-3-phosphate (EPSP) to yield chorismate, which is the branch point compound that serves as the starting substrate for the three terminal pathways of aromatic amino acid biosynthesis. This reaction introduces a second double bond into the aromatic ring system. The polypeptide is Chorismate synthase (Saccharolobus islandicus (strain L.S.2.15 / Lassen #1) (Sulfolobus islandicus)).